The following is a 130-amino-acid chain: Small ribosomal subunit protein uS9 (130 aa).

Residues 105–130 (TRDPRMKERKKYGLHKARKAPQYSKR) form a disordered region. Positions 111–130 (KERKKYGLHKARKAPQYSKR) are enriched in basic residues.

Belongs to the universal ribosomal protein uS9 family.

The protein is Small ribosomal subunit protein uS9 of Syntrophomonas wolfei subsp. wolfei (strain DSM 2245B / Goettingen).